Here is a 140-residue protein sequence, read N- to C-terminus: Nucleoside diphosphate kinase (140 aa).

ATP contacts are provided by K11, F59, R87, T93, R104, and N114. H117 (pros-phosphohistidine intermediate) is an active-site residue.

It belongs to the NDK family. As to quaternary structure, homotetramer. Mg(2+) is required as a cofactor.

It localises to the cytoplasm. It catalyses the reaction a 2'-deoxyribonucleoside 5'-diphosphate + ATP = a 2'-deoxyribonucleoside 5'-triphosphate + ADP. The catalysed reaction is a ribonucleoside 5'-diphosphate + ATP = a ribonucleoside 5'-triphosphate + ADP. Functionally, major role in the synthesis of nucleoside triphosphates other than ATP. The ATP gamma phosphate is transferred to the NDP beta phosphate via a ping-pong mechanism, using a phosphorylated active-site intermediate. The chain is Nucleoside diphosphate kinase from Rhizobium etli (strain ATCC 51251 / DSM 11541 / JCM 21823 / NBRC 15573 / CFN 42).